A 45-amino-acid polypeptide reads, in one-letter code: Photosystem II reaction center protein K (45 aa).

The propeptide occupies 1–8; the sequence is MEAALLLA. A helical transmembrane segment spans residues 24–44; that stretch reads LPLIPLFFLLLAFVWQAAVGF.

The protein belongs to the PsbK family. As to quaternary structure, PSII is composed of 1 copy each of membrane proteins PsbA, PsbB, PsbC, PsbD, PsbE, PsbF, PsbH, PsbI, PsbJ, PsbK, PsbL, PsbM, PsbT, PsbX, PsbY, PsbZ, Psb30/Ycf12, peripheral proteins PsbO, CyanoQ (PsbQ), PsbU, PsbV and a large number of cofactors. It forms dimeric complexes.

The protein localises to the cellular thylakoid membrane. Functionally, one of the components of the core complex of photosystem II (PSII). PSII is a light-driven water:plastoquinone oxidoreductase that uses light energy to abstract electrons from H(2)O, generating O(2) and a proton gradient subsequently used for ATP formation. It consists of a core antenna complex that captures photons, and an electron transfer chain that converts photonic excitation into a charge separation. This chain is Photosystem II reaction center protein K, found in Picosynechococcus sp. (strain ATCC 27264 / PCC 7002 / PR-6) (Agmenellum quadruplicatum).